The chain runs to 434 residues: Eukaryotic translation initiation factor 3 subunit E-1 (434 aa).

The PCI domain occupies 219–392 (FFNHPKGRDL…GHVVMGTQPL (174 aa)).

The protein belongs to the eIF-3 subunit E family. As to quaternary structure, component of the eukaryotic translation initiation factor 3 (eIF-3) complex. The eIF-3 complex interacts with pix. Interacts with mxt.

It is found in the cytoplasm. Functionally, component of the eukaryotic translation initiation factor 3 (eIF-3) complex, which is involved in protein synthesis of a specialized repertoire of mRNAs and, together with other initiation factors, stimulates binding of mRNA and methionyl-tRNAi to the 40S ribosome. The eIF-3 complex specifically targets and initiates translation of a subset of mRNAs involved in cell proliferation. This is Eukaryotic translation initiation factor 3 subunit E-1 (eIF3-S6-1) from Drosophila willistoni (Fruit fly).